Reading from the N-terminus, the 210-residue chain is Calcium-activated potassium channel subunit beta-4 (210 aa).

Residues 1 to 19 (MAKLRVSYEYTEAEDKSIR) lie on the Cytoplasmic side of the membrane. The helical transmembrane segment at 20–40 (LGLFLIVSGILSLFIFGFCWL) threads the bilayer. The Extracellular portion of the chain corresponds to 41–167 (SPALQDLQAT…DVLLQRTHDE (127 aa)). N-linked (GlcNAc...) asparagine glycans are attached at residues Asn-53 and Asn-90. Residues 168–188 (IVLLHCFLWPVVAFVVGVLIV) form a helical membrane-spanning segment. Residues 189–210 (VLTICAKSLAVKAEAMKKRKFS) are Cytoplasmic-facing.

Belongs to the KCNMB (TC 8.A.14.1) family. KCNMB4 subfamily. In terms of assembly, interacts with KCNMA1 tetramer. There are probably 4 molecules of KCMNB4 per KCNMA1 tetramer. Interacts with FMR1 (via N-terminus). In terms of processing, phosphorylated. Phosphorylation modulates its effect on KCNMA1 activation kinetics. N-glycosylated. A highly glycosylated form is promoted by KCNMA1. Glycosylation, which is not required for the interaction with KCNMA1 and subcellular location, increases protection against charybdotoxin.

The protein localises to the membrane. Its function is as follows. Regulatory subunit of the calcium activated potassium KCNMA1 (maxiK) channel. Modulates the calcium sensitivity and gating kinetics of KCNMA1, thereby contributing to KCNMA1 channel diversity. Decreases the gating kinetics and calcium sensitivity of the KCNMA1 channel, but with fast deactivation kinetics. May decrease KCNMA1 channel openings at low calcium concentrations but increases channel openings at high calcium concentrations. Makes KCNMA1 channel resistant to 100 nM charybdotoxin (CTX) toxin concentrations. The protein is Calcium-activated potassium channel subunit beta-4 (Kcnmb4) of Rattus norvegicus (Rat).